The sequence spans 329 residues: Ankyrin repeat and SOCS box protein 5 (329 aa).

ANK repeat units follow at residues 69–98, 102–131, 135–164, 167–196, 200–229, and 232–261; these read ADRSPLHEAASQGRLLALRTLLSQGYNVNA, DHVTPLHEACLGDHVACARTLLEAGANANA, DGVTPLFNACSQGSASCAELLLEYGAKAQL, CFPSPTHEAASKGHHECLDILIAWGIDVDQ, HLGTPLYVACMSQQFHCIWKLLYAGADVHK, and YWDTPLHAAAQQPSTEIVNLLLEFGADINA. Positions 278 to 329 constitute an SOCS box domain; that stretch reads AVERILLQHEATPSSLCQLCRLCIRNYIGRQRFHLIPQLQLPTLLQNFLQYR.

Belongs to the ankyrin SOCS box (ASB) family.

It participates in protein modification; protein ubiquitination. Functionally, may be a substrate-recognition component of a SCF-like ECS (Elongin-Cullin-SOCS-box protein) E3 ubiquitin-protein ligase complex which mediates the ubiquitination and subsequent proteasomal degradation of target proteins. May play a role in the initiation of arteriogenesis. The polypeptide is Ankyrin repeat and SOCS box protein 5 (Asb5) (Mus musculus (Mouse)).